The chain runs to 272 residues: Putative hydro-lyase AZC_4080 (272 aa).

It belongs to the D-glutamate cyclase family.

In Azorhizobium caulinodans (strain ATCC 43989 / DSM 5975 / JCM 20966 / LMG 6465 / NBRC 14845 / NCIMB 13405 / ORS 571), this protein is Putative hydro-lyase AZC_4080.